Reading from the N-terminus, the 439-residue chain is Potassium/proton antiporter CemA (439 aa).

Transmembrane regions (helical) follow at residues 55–75, 79–99, 220–240, 317–337, 364–384, and 399–419; these read IMLY…WSLL, ISLF…NFFN, YMLF…IWFL, LLHL…FILG, ILLL…EIVI, and IISC…KYWI.

Belongs to the CemA family.

It is found in the plastid. It localises to the chloroplast inner membrane. It carries out the reaction K(+)(in) + H(+)(out) = K(+)(out) + H(+)(in). Functionally, contributes to K(+)/H(+) antiport activity by supporting proton efflux to control proton extrusion and homeostasis in chloroplasts in a light-dependent manner to modulate photosynthesis. Prevents excessive induction of non-photochemical quenching (NPQ) under continuous-light conditions. Indirectly promotes efficient inorganic carbon uptake into chloroplasts. This chain is Potassium/proton antiporter CemA, found in Physcomitrium patens (Spreading-leaved earth moss).